The following is a 71-amino-acid chain: Large ribosomal subunit protein bL31 (71 aa).

The Zn(2+) site is built by C16, C18, C37, and C40.

This sequence belongs to the bacterial ribosomal protein bL31 family. Type A subfamily. In terms of assembly, part of the 50S ribosomal subunit. Zn(2+) is required as a cofactor.

Functionally, binds the 23S rRNA. In Pseudomonas aeruginosa (strain LESB58), this protein is Large ribosomal subunit protein bL31.